The following is an 85-amino-acid chain: Putative membrane protein insertion efficiency factor (85 aa).

Belongs to the UPF0161 family.

Its subcellular location is the cell membrane. In terms of biological role, could be involved in insertion of integral membrane proteins into the membrane. The polypeptide is Putative membrane protein insertion efficiency factor (Leifsonia xyli subsp. xyli (strain CTCB07)).